Reading from the N-terminus, the 402-residue chain is MVQALTASLMAGALLARGIIGAKADPVNFAGIGGAAYEYNYTATGSFNQSIMPANFTPAGGIDTNDSSPTYHPFSDFDYQSLSLALYHEYIEYDLFNYGLTKFSDAEFDEAGIDAEYRHLIRFMAQQEIGHIELVTNMLGPNAPKACSYQYNFDTVGSFIDFAQTLTKWSESGVYGFLPHLDSRAAAALLLQSITTEARQQMSLRQLQGLFPYPVWFETGIPQSFAWSLIAPFIVGCPAENEKLVWQNFPALHLVSPPVHTNFTNGSFPQYPNGTYMYPAAVSTNRTFPLSLPGQSVELAWDAPGMAVGPNSSYITSTSAGTPRYAAWISQLNVTYAPLNITGNNSGVTYQPSSHLYNDSTQQVINGTNFLVLVDEAIPVTPFNITAINEHVVAGPLVYESG.

Its function is as follows. May have a function in stress-related responses of the cell. The chain is Protein rds1 (rds1) from Schizosaccharomyces pombe (strain 972 / ATCC 24843) (Fission yeast).